The sequence spans 301 residues: Acetylglutamate kinase (301 aa).

Residues G71 to G72, R93, and N198 each bind substrate.

It belongs to the acetylglutamate kinase family. ArgB subfamily.

Its subcellular location is the cytoplasm. It catalyses the reaction N-acetyl-L-glutamate + ATP = N-acetyl-L-glutamyl 5-phosphate + ADP. Its pathway is amino-acid biosynthesis; L-arginine biosynthesis; N(2)-acetyl-L-ornithine from L-glutamate: step 2/4. Catalyzes the ATP-dependent phosphorylation of N-acetyl-L-glutamate. The chain is Acetylglutamate kinase from Zymomonas mobilis subsp. mobilis (strain ATCC 31821 / ZM4 / CP4).